The following is a 157-amino-acid chain: Glutathione peroxidase (157 aa).

Residue Cys-35 is part of the active site.

This sequence belongs to the glutathione peroxidase family.

The catalysed reaction is 2 glutathione + H2O2 = glutathione disulfide + 2 H2O. This Lactococcus lactis subsp. cremoris (strain MG1363) protein is Glutathione peroxidase (gpo).